Reading from the N-terminus, the 236-residue chain is 2-C-methyl-D-erythritol 4-phosphate cytidylyltransferase (236 aa).

This sequence belongs to the IspD/TarI cytidylyltransferase family. IspD subfamily.

The enzyme catalyses 2-C-methyl-D-erythritol 4-phosphate + CTP + H(+) = 4-CDP-2-C-methyl-D-erythritol + diphosphate. The protein operates within isoprenoid biosynthesis; isopentenyl diphosphate biosynthesis via DXP pathway; isopentenyl diphosphate from 1-deoxy-D-xylulose 5-phosphate: step 2/6. Its function is as follows. Catalyzes the formation of 4-diphosphocytidyl-2-C-methyl-D-erythritol from CTP and 2-C-methyl-D-erythritol 4-phosphate (MEP). This chain is 2-C-methyl-D-erythritol 4-phosphate cytidylyltransferase, found in Azoarcus sp. (strain BH72).